Consider the following 428-residue polypeptide: Cytochrome P450-terp (428 aa).

Cysteine 377 is a binding site for heme.

The protein belongs to the cytochrome P450 family. Heme serves as cofactor.

It localises to the cytoplasm. Its function is as follows. Catalyzes the hydroxylation of alpha-terpineol. The chain is Cytochrome P450-terp (cyp108) from Pseudomonas sp.